A 101-amino-acid chain; its full sequence is Chaperone modulatory protein CbpM (101 aa).

This sequence belongs to the CbpM family.

Interacts with CbpA and inhibits both the DnaJ-like co-chaperone activity and the DNA binding activity of CbpA. Together with CbpA, modulates the activity of the DnaK chaperone system. Does not inhibit the co-chaperone activity of DnaJ. The sequence is that of Chaperone modulatory protein CbpM from Escherichia coli O1:K1 / APEC.